The chain runs to 179 residues: ADP-ribosylation factor-like protein 5B (179 aa).

The N-myristoyl glycine moiety is linked to residue Gly2. GTP is bound by residues 23–30 (GLDNAGKT), 66–70 (DIGGQ), 125–128 (NKQD), and Ala159.

It belongs to the small GTPase superfamily. Arf family.

Binds and exchanges GTP and GDP. This Mus musculus (Mouse) protein is ADP-ribosylation factor-like protein 5B (Arl5b).